The chain runs to 437 residues: Pyrophosphate--fructose 6-phosphate 1-phosphotransferase (437 aa).

A diphosphate-binding site is contributed by glycine 27. Mg(2+) is bound at residue aspartate 122. Substrate-binding positions include 147–149, 193–195, glutamate 261, and 323–326; these read TID, MGR, and YELR. Aspartate 149 serves as the catalytic Proton acceptor.

Belongs to the phosphofructokinase type A (PFKA) family. PPi-dependent PFK group II subfamily. Clade 'Short' sub-subfamily. Homotetramer. Mg(2+) is required as a cofactor. Mn(2+) serves as cofactor.

It is found in the cytoplasm. The enzyme catalyses beta-D-fructose 6-phosphate + diphosphate = beta-D-fructose 1,6-bisphosphate + phosphate + H(+). The protein operates within carbohydrate degradation; glycolysis; D-glyceraldehyde 3-phosphate and glycerone phosphate from D-glucose: step 3/4. Activated by AMP. Probably promotes oligomerization of the enzyme. In terms of biological role, catalyzes the phosphorylation of D-fructose 6-phosphate, the first committing step of glycolysis. Uses inorganic phosphate (PPi) as phosphoryl donor instead of ATP like common ATP-dependent phosphofructokinases (ATP-PFKs), which renders the reaction reversible, and can thus function both in glycolysis and gluconeogenesis. Consistently, PPi-PFK can replace the enzymes of both the forward (ATP-PFK) and reverse (fructose-bisphosphatase (FBPase)) reactions. In Naegleria fowleri (Brain eating amoeba), this protein is Pyrophosphate--fructose 6-phosphate 1-phosphotransferase.